The following is a 331-amino-acid chain: 6-phosphogluconolactonase (331 aa).

Lysine 287 bears the N6-acetyllysine mark.

It belongs to the cycloisomerase 2 family.

The catalysed reaction is 6-phospho-D-glucono-1,5-lactone + H2O = 6-phospho-D-gluconate + H(+). It functions in the pathway carbohydrate degradation; pentose phosphate pathway; D-ribulose 5-phosphate from D-glucose 6-phosphate (oxidative stage): step 2/3. Functionally, catalyzes the hydrolysis of 6-phosphogluconolactone to 6-phosphogluconate. The polypeptide is 6-phosphogluconolactonase (Escherichia fergusonii (strain ATCC 35469 / DSM 13698 / CCUG 18766 / IAM 14443 / JCM 21226 / LMG 7866 / NBRC 102419 / NCTC 12128 / CDC 0568-73)).